A 163-amino-acid chain; its full sequence is Choriogonadotropin subunit beta variant 2 (163 aa).

A signal peptide spans 1 to 18 (MSKGLLLLLLLSMGGTWA). Disulfide bonds link cysteine 27–cysteine 75, cysteine 41–cysteine 90, cysteine 44–cysteine 128, cysteine 52–cysteine 106, cysteine 56–cysteine 108, and cysteine 111–cysteine 118. Residues asparagine 31 and asparagine 48 are each glycosylated (N-linked (GlcNAc...) asparagine). Residues 129 to 163 (DDPRFQASSSSKAPPPSLPSPSRLPGPSDTPILPQ) form a disordered region. Residues 141–152 (APPPSLPSPSRL) are compositionally biased toward pro residues.

The protein belongs to the glycoprotein hormones subunit beta family. In terms of tissue distribution, expressed in placenta, testis and pituitary.

It localises to the secreted. This is Choriogonadotropin subunit beta variant 2 (CGB2) from Homo sapiens (Human).